The primary structure comprises 448 residues: Putative vacuolar cation/proton exchanger 6 (448 aa).

Over 31–81 (MGLVNEVELKSLLEQETDSPQTNAASLMEQGSLRERRAKAPRNSVVQSFKI) the chain is Cytoplasmic. The chain crosses the membrane as a helical span at residues 82-102 (VILSNKLNLLLPFGPLAILVH). Topologically, residues 103-109 (YLTDNKG) are extracellular. A helical transmembrane segment spans residues 110–130 (WFFLLSLVGITPLAERLGYAT). The Cytoplasmic portion of the chain corresponds to 131-141 (EQLSCYTGATV). A helical transmembrane segment spans residues 142 to 162 (GGLLNATFGNVIELIISIIAL). A cation selection region spans residues 150 to 185 (GNVIELIISIIALKNGMIRVVQLTLLGSILSNILLV). Residues 163–178 (KNGMIRVVQLTLLGSI) are Extracellular-facing. The chain crosses the membrane as a helical span at residues 179–199 (LSNILLVLGCAFFCGGLVFPG). Residues 200-209 (KDQVFDKRNA) lie on the Cytoplasmic side of the membrane. A helical transmembrane segment spans residues 210-230 (VVSSGMLLMAVMGLLFPTFLH). The Extracellular segment spans residues 231 to 243 (YTHSEVHAGSSEL). The chain crosses the membrane as a helical span at residues 244–264 (ALSRFISCIMLVAYAAYLFFQ). The Cytoplasmic segment spans residues 265–295 (LKSQPSFYTEKTNQNEETSNDDEDPEISKWE). A helical membrane pass occupies residues 296-316 (AIIWLSIFTAWVSLLSGYLVD). Topologically, residues 317–334 (AIEGTSVSWKIPISFISV) are extracellular. A helical transmembrane segment spans residues 335 to 355 (ILLPIVGNAAEHAGAIMFAMK). The interval 341-376 (GNAAEHAGAIMFAMKDKLDLSLGVAIGSSIQISMFA) is cation selection. Residues 356 to 363 (DKLDLSLG) lie on the Cytoplasmic side of the membrane. The helical transmembrane segment at 364–384 (VAIGSSIQISMFAVPFCVVIG) threads the bilayer. Residues 385–393 (WMMGAQMDL) are Extracellular-facing. Residues 394–414 (NLQLFETATLLITVIVVAFFL) traverse the membrane as a helical segment. Topologically, residues 415 to 425 (QLEGTSNYFKR) are cytoplasmic. Residues 426–446 (LMLILCYLIVAASFFVHEDPH) traverse the membrane as a helical segment. The Extracellular portion of the chain corresponds to 447–448 (QG).

Belongs to the Ca(2+):cation antiporter (CaCA) (TC 2.A.19) family. Cation/proton exchanger (CAX) subfamily.

The protein resides in the vacuole membrane. Functionally, vacuolar cation/proton exchanger (CAX). Translocates Ca(2+) and other metal ions into vacuoles using the proton gradient formed by H(+)-ATPase and H(+)-pyrophosphatase. This is Putative vacuolar cation/proton exchanger 6 (CAX6) from Arabidopsis thaliana (Mouse-ear cress).